We begin with the raw amino-acid sequence, 695 residues long: Electrogenic aspartate/glutamate antiporter Aralar, mitochondrial (695 aa).

The interval 1-310 (MPMHIPFPFN…DYSDLSNIAP (310 aa)) is N-terminal domain. The Mitochondrial intermembrane portion of the chain corresponds to 2–345 (PMHIPFPFNW…FIQVLESSYR (344 aa)). 4 EF-hand domains span residues 71–104 (FNDESVRLLANIADTSKDGLISFSEFQAFEGLLC), 105–140 (TPDALYRTAFQLFDRKGNGTVSYADFADVVQKTELH), 142–175 (KIPFSLDGPFIKRYFGDKKQRLINYAEFTQLLHD), and 176–211 (FHEEHAMEAFRSKDPAGTGFISPLDFQDIIVNVKRH). Ca(2+) is bound by residues D84, S86, D88, L90, E95, D118, N122, T124, and D129. The Ca(2+) site is built by D189, T193, and D200. Positions 311 to 327 (EHYTKHMTHRLAEIKAV) are linker loop domain. The carrier domain stretch occupies residues 336–627 (FIQVLESSYR…RLFYVDFGGT (292 aa)). Solcar repeat units follow at residues 340–431 (LESS…VRDK), 439–523 (IPTW…TKAM), and 531–619 (NHPL…LQRL). Residues 346 to 363 (FTLGSFAGAVGATVVYPI) traverse the membrane as a helical segment. Residues 364–405 (DLVKTRMQNQRAGSYIGEVAYRNSWDCFKKVVRHEGFMGLYR) are Mitochondrial matrix-facing. The chain crosses the membrane as a helical span at residues 406 to 425 (GLLPQLMGVAPEKAIKLTVN). At 426–448 (DLVRDKLTDKKGNIPTWAEVLAG) the chain is on the mitochondrial intermembrane side. A helical transmembrane segment spans residues 449–462 (GCAGASQVVFTNPL). At 463 to 497 (EIVKIRLQVAGEIASGSKIRAWSVVRELGLFGLYK) the chain is on the mitochondrial matrix side. The chain crosses the membrane as a helical span at residues 498 to 517 (GARACLLRDVPFSAIYFPTY). The Mitochondrial intermembrane portion of the chain corresponds to 518-536 (AHTKAMMADKDGYNHPLTL). Residues 537–554 (LAAGAIAGVPAASLVTPA) traverse the membrane as a helical segment. Topologically, residues 555-593 (DVIKTRLQVVARSGQTTYTGVWDATKKIMAEEGPRAFWK) are mitochondrial matrix. A helical transmembrane segment spans residues 594-613 (GTAARVFRSSPQFGVTLVTY). Topologically, residues 614 to 695 (ELLQRLFYVD…AASPSTATGS (82 aa)) are mitochondrial intermembrane. The C-terminal domain stretch occupies residues 628 to 695 (QPKGSEAHKI…AASPSTATGS (68 aa)).

Belongs to the mitochondrial carrier (TC 2.A.29) family. In terms of assembly, homodimer (via N-terminus). Ca(2+) serves as cofactor. As to expression, expressed throughout the body in both males and females, including in ovaries and testes. Specifically expressed in female ovaries. In terms of tissue distribution, expressed throughout the body in both males and females but absent from ovaries and testes.

Its subcellular location is the mitochondrion inner membrane. It catalyses the reaction L-aspartate(in) + L-glutamate(out) + H(+)(out) = L-aspartate(out) + L-glutamate(in) + H(+)(in). The catalysed reaction is 3-sulfino-L-alanine(out) + L-glutamate(in) + H(+)(in) = 3-sulfino-L-alanine(in) + L-glutamate(out) + H(+)(out). The enzyme catalyses L-2-aminoadipate(in) + L-glutamate(out) + H(+)(out) = L-2-aminoadipate(out) + L-glutamate(in) + H(+)(in). It carries out the reaction L-glutamine(in) + L-glutamate(out) + Na(+)(out) + H(+)(out) = L-glutamine(out) + L-glutamate(in) + Na(+)(in) + H(+)(in). With respect to regulation, activated by Ca(2+). Inhibited by p-chloromercuribenzoate, pyrocarbonate, mersalyl, tannic acid and N-ethylmaleimide. In terms of biological role, mitochondrial electrogenic aspartate/glutamate antiporter that favors efflux of aspartate and entry of glutamate and proton within the mitochondria as part of the malate-aspartate shuttle. Also mediates the exchange of L-cysteinesulfinate (3-sulfino-L-alanine) for L-glutamate. Necessary for gamma-aminobutyric acid (GABA) uptake in brain mitochondria in response to increased mitochondrial membrane polarization; does not possess detectable GABA transport activity but role may be indirect. Functionally, possesses transport activity towards L-aspartate, L-glutamate and L-cysteinesulfinate (3-sulfino-L-alanine). L-glutamine transport activity is undetectable. GABA transport activity is undetectable. Its function is as follows. Possesses transport activity towards L-aspartate, L-glutamate and L-cysteinesulfinate (3-sulfino-L-alanine). Has a wider substrate specificity range that includes L-2-aminoadipate and L-glutamine. GABA transport activity is undetectable. The polypeptide is Electrogenic aspartate/glutamate antiporter Aralar, mitochondrial (Drosophila melanogaster (Fruit fly)).